A 271-amino-acid chain; its full sequence is Mediator of RNA polymerase II transcription subunit 18 (271 aa).

The segment at 89–119 (FGGNPSSSGDPDVSMSGLEEKPSSSSSSYSY) is disordered.

This sequence belongs to the Mediator complex subunit 18 family. As to quaternary structure, component of the Mediator complex.

The protein localises to the nucleus. Component of the Mediator complex, a coactivator involved in the regulated transcription of nearly all RNA polymerase II-dependent genes. Mediator functions as a bridge to convey information from gene-specific regulatory proteins to the basal RNA polymerase II transcription machinery. Mediator is recruited to promoters by direct interactions with regulatory proteins and serves as a scaffold for the assembly of a functional preinitiation complex with RNA polymerase II and the general transcription factors. This chain is Mediator of RNA polymerase II transcription subunit 18 (srb5), found in Aspergillus niger (strain ATCC MYA-4892 / CBS 513.88 / FGSC A1513).